The sequence spans 173 residues: Transmembrane protein 240 (173 aa).

Helical transmembrane passes span 5-25 (ANTM…ACLM) and 90-110 (LMLG…MDGV). S169 is modified (phosphoserine).

It is found in the synapse. Its subcellular location is the cell membrane. This chain is Transmembrane protein 240 (Tmem240), found in Mus musculus (Mouse).